We begin with the raw amino-acid sequence, 742 residues long: Collectin-12 (742 aa).

Topologically, residues 1–37 are cytoplasmic; the sequence is MKDDFAEEEEVQSFGYKRFGIQEGTQCTKCKNNWALK. Residues 38–58 form a helical; Signal-anchor for type II membrane protein membrane-spanning segment; that stretch reads FSIILLYVLCALLTITVAILG. At 59-742 the chain is on the extracellular side; the sequence is YKVVEKMDTV…EREAVPSSIL (684 aa). The stretch at 104 to 142 forms a coiled coil; that stretch reads TNSELSTFRSDILDLRQQLQEITEKTSKNKDMLEKLQAN. 3 N-linked (GlcNAc...) asparagine glycosylation sites follow: Asn-159, Asn-168, and Asn-271. A coiled-coil region spans residues 220 to 301; it reads ITNLQRSVDD…SFTGQMDNIT (82 aa). A disordered region spans residues 439–608; that stretch reads TILQGPPGPR…TPASEVNGCP (170 aa). Collagen-like domains are found at residues 452-511 and 527-586; these read GDRG…KGSR and GPPG…PGPS. Residues 501–514 are compositionally biased toward low complexity; it reads SKGSQGPKGSRGSP. The span at 516-532 shows a compositional bias: pro residues; sequence KPGPQGPSGDPGPPGPP. The segment covering 534-556 has biased composition (low complexity); that stretch reads KDGLPGPQGPPGFQGLQGTVGEP. A compositionally biased stretch (pro residues) spans 571-585; sequence PGMPGPKGPPGPPGP. Intrachain disulfides connect Cys-607–Cys-618, Cys-635–Cys-730, and Cys-708–Cys-722. Residues 614–731 enclose the C-type lectin domain; that stretch reads FTDKCYYFSV…CDEINNFICE (118 aa). The Ca(2+) site is built by Phe-644, Asn-646, Glu-650, Asp-670, and Glu-674. The a carbohydrate site is built by Lys-691, Gln-694, and Asp-696. Gln-694, Asp-696, Asn-697, Glu-706, Asp-707, Asn-718, Asp-719, and Glu-731 together coordinate Ca(2+). Residue Glu-706 participates in a carbohydrate binding. Residues Asn-718 and Asp-719 each contribute to the a carbohydrate site.

The extracellular domain forms a stable trimer. The extracellular domain interacts with fibrillar amyloid-beta peptide. Highly expressed in lung, spleen, small and large intestine, stomach and brain. Expressed in neonatal microglia.

The protein resides in the membrane. Functionally, scavenger receptor that displays several functions associated with host defense. Promotes binding and phagocytosis of Gram-positive, Gram-negative bacteria and yeast. Mediates the recognition, internalization and degradation of oxidatively modified low density lipoprotein (oxLDL) by vascular endothelial cells. Binds to several carbohydrates including Gal-type ligands, D-galactose, L- and D-fucose, GalNAc, T and Tn antigens in a calcium-dependent manner and internalizes specifically GalNAc in nurse-like cells. Also binds to sialyl Lewis X or a trisaccharide and asialo-orosomucoid (ASOR). The protein is Collectin-12 (Colec12) of Rattus norvegicus (Rat).